The primary structure comprises 422 residues: 2-oxoglutarate and iron-dependent oxygenase JMJD4 (422 aa).

Residues 139–298 (QRNFPEHNIY…IMWQFLQDEL (160 aa)) form the JmjC domain. The Fe cation site is built by His-186, Asp-188, and His-266.

It belongs to the JMJD6 family. Fe(2+) is required as a cofactor.

It localises to the cytoplasm. The catalysed reaction is L-lysyl-[protein] + 2-oxoglutarate + O2 = 4-hydroxy-L-lysyl-[protein] + succinate + CO2. Its function is as follows. Catalyzes the 2-oxoglutarate and iron-dependent C4-lysyl hydroxylation of ETF1 at 'Lys-63' thereby promoting the translational termination efficiency of ETF1. The chain is 2-oxoglutarate and iron-dependent oxygenase JMJD4 (jmjd4) from Danio rerio (Zebrafish).